A 1050-amino-acid polypeptide reads, in one-letter code: RecBCD enzyme subunit RecB (1050 aa).

The UvrD-like helicase ATP-binding domain occupies 1–443; sequence MKPFNIFDSN…LQLVNNYRST (443 aa). Positions 1-766 are DNA-binding and helicase activity, interacts with RecC; it reads MKPFNIFDSN…TNYVKLEGTQ (766 aa). 21-28 is a binding site for ATP; sequence ASAGTGKT. In terms of domain architecture, UvrD-like helicase C-terminal spans 458–701; sequence SPFLEIPGYL…KITTIHSSKG (244 aa). Residues 814–1050 form a nuclease activity, interacts with RecD and RecA region; sequence PKTIFSFSST…KAIQKCQAYH (237 aa). 3 residues coordinate Mg(2+): H859, D945, and D958. The active-site For nuclease activity is the D958.

It belongs to the helicase family. UvrD subfamily. In terms of assembly, heterotrimer of RecB, RecC and RecD. All subunits contribute to DNA-binding. Interacts with RecA. Mg(2+) serves as cofactor.

It catalyses the reaction Exonucleolytic cleavage (in the presence of ATP) in either 5'- to 3'- or 3'- to 5'-direction to yield 5'-phosphooligonucleotides.. The enzyme catalyses Couples ATP hydrolysis with the unwinding of duplex DNA by translocating in the 3'-5' direction.. It carries out the reaction ATP + H2O = ADP + phosphate + H(+). Its function is as follows. A helicase/nuclease that prepares dsDNA breaks (DSB) for recombinational DNA repair. Binds to DSBs and unwinds DNA via a highly rapid and processive ATP-dependent bidirectional helicase activity. Unwinds dsDNA until it encounters a Chi (crossover hotspot instigator) sequence from the 3' direction. Cuts ssDNA a few nucleotides 3' to the Chi site. The properties and activities of the enzyme are changed at Chi. The Chi-altered holoenzyme produces a long 3'-ssDNA overhang and facilitates RecA-binding to the ssDNA for homologous DNA recombination and repair. Holoenzyme degrades any linearized DNA that is unable to undergo homologous recombination. In the holoenzyme this subunit contributes ATPase, 3'-5' helicase, exonuclease activity and loads RecA onto ssDNA. This is RecBCD enzyme subunit RecB from Chlamydia pneumoniae (Chlamydophila pneumoniae).